Reading from the N-terminus, the 348-residue chain is Protein RecA (348 aa).

65–72 provides a ligand contact to ATP; it reads GPESSGKT.

The protein belongs to the RecA family.

It is found in the cytoplasm. Can catalyze the hydrolysis of ATP in the presence of single-stranded DNA, the ATP-dependent uptake of single-stranded DNA by duplex DNA, and the ATP-dependent hybridization of homologous single-stranded DNAs. It interacts with LexA causing its activation and leading to its autocatalytic cleavage. The sequence is that of Protein RecA from Saccharophagus degradans (strain 2-40 / ATCC 43961 / DSM 17024).